The sequence spans 210 residues: Protein GET1 (210 aa).

The Lumenal segment spans residues 1-4; sequence MASL. A helical membrane pass occupies residues 5 to 24; sequence LIIVFLSHVVTYLINTIGAT. Over 25–110 the chain is Cytoplasmic; that stretch reads TVDNLLWLLY…SFDLTVKSVR (86 aa). Residues 43 to 97 are a coiled coil; that stretch reads RTAVEQRRLKGEVVQLKREMKSTSSQDEFAKWAKLRRRHDKAMEEYEAKNKALGK. The chain crosses the membrane as a helical span at residues 111 to 131; the sequence is FFSTTGLKFFLQFWYSKTPMF. The Lumenal segment spans residues 132–155; that stretch reads ELPRGWVPWQVEWVLSFPRAPLGT. A helical transmembrane segment spans residues 156–172; that stretch reads VSIQVWSGVCTTVVSLA. Topologically, residues 173 to 210 are cytoplasmic; that stretch reads GDALGVVIQSLILKMTKRGVARTSEGRPSQPMALKKEL.

Belongs to the WRB/GET1 family. In terms of assembly, interacts with GET3.

It localises to the endoplasmic reticulum membrane. Required for the post-translational delivery of tail-anchored (TA) proteins to the endoplasmic reticulum. Acts as a membrane receptor for soluble GET3, which recognizes and selectively binds the transmembrane domain of TA proteins in the cytosol. The chain is Protein GET1 from Uncinocarpus reesii (strain UAMH 1704).